The sequence spans 1008 residues: DNA polymerase catalytic subunit (1008 aa).

The protein belongs to the DNA polymerase type-B family.

It localises to the host nucleus. The enzyme catalyses DNA(n) + a 2'-deoxyribonucleoside 5'-triphosphate = DNA(n+1) + diphosphate. The polypeptide is DNA polymerase catalytic subunit (9) (Equine herpesvirus 2 (strain 86/87) (EHV-2)).